The primary structure comprises 83 residues: Small ribosomal subunit protein uS17 (83 aa).

This sequence belongs to the universal ribosomal protein uS17 family. In terms of assembly, part of the 30S ribosomal subunit.

Its function is as follows. One of the primary rRNA binding proteins, it binds specifically to the 5'-end of 16S ribosomal RNA. This Campylobacter concisus (strain 13826) protein is Small ribosomal subunit protein uS17.